A 415-amino-acid chain; its full sequence is Calcium/calmodulin-dependent serine/threonine-protein kinase (415 aa).

The Protein kinase domain occupies Y12–V308. ATP-binding positions include L18 to V26 and K46. Catalysis depends on D173, which acts as the Proton acceptor. The interval M318–S328 is calmodulin-binding.

It belongs to the protein kinase superfamily. CAMK Ser/Thr protein kinase family. CaMK subfamily.

It catalyses the reaction L-seryl-[protein] + ATP = O-phospho-L-seryl-[protein] + ADP + H(+). It carries out the reaction L-threonyl-[protein] + ATP = O-phospho-L-threonyl-[protein] + ADP + H(+). Functionally, may be involved in signal transduction processes. The protein is Calcium/calmodulin-dependent serine/threonine-protein kinase of Malus domestica (Apple).